Reading from the N-terminus, the 158-residue chain is Small ribosomal subunit protein uS13 (158 aa).

The protein belongs to the universal ribosomal protein uS13 family. Part of the 30S ribosomal subunit. Forms a loose heterodimer with protein S19. Forms two bridges to the 50S subunit in the 70S ribosome.

In terms of biological role, located at the top of the head of the 30S subunit, it contacts several helices of the 16S rRNA. In the 70S ribosome it contacts the 23S rRNA (bridge B1a) and protein L5 of the 50S subunit (bridge B1b), connecting the 2 subunits; these bridges are implicated in subunit movement. The sequence is that of Small ribosomal subunit protein uS13 from Picrophilus torridus (strain ATCC 700027 / DSM 9790 / JCM 10055 / NBRC 100828 / KAW 2/3).